The primary structure comprises 364 residues: Sec-independent protein translocase protein TatC (364 aa).

7 helical membrane-spanning segments follow: residues 42-62, 107-127, 139-159, 160-180, 194-214, 225-245, and 246-266; these read IALLAFAIAGVVCFIFEPRIF, MIAAVVVSSPVWLYQLWSFIT, LTFVGVSLVLFATGAVFAYLT, LSTGLGLLLGFGGNGLVSVLD, IFGLSFEVPLLVMMLNLAGIV, PEIFLVFVFAAVVTPSQDPFT, and MLALGLPMVLLYEVALIIGWL. Positions 277–364 are disordered; the sequence is TSPYADLDDD…STDVTHGDIT (88 aa). The span at 282-295 shows a compositional bias: acidic residues; the sequence is DLDDDETSPLDFDD. Over residues 301–320 the composition is skewed to low complexity; the sequence is AASAGPAATATSPGTANPPG. A compositionally biased stretch (polar residues) spans 324–344; that stretch reads PPGTANPVGTANPVGTGSSTP.

Belongs to the TatC family. As to quaternary structure, the Tat system comprises two distinct complexes: a TatABC complex, containing multiple copies of TatA, TatB and TatC subunits, and a separate TatA complex, containing only TatA subunits. Substrates initially bind to the TatABC complex, which probably triggers association of the separate TatA complex to form the active translocon.

The protein localises to the cell membrane. Functionally, part of the twin-arginine translocation (Tat) system that transports large folded proteins containing a characteristic twin-arginine motif in their signal peptide across membranes. Together with TatB, TatC is part of a receptor directly interacting with Tat signal peptides. The chain is Sec-independent protein translocase protein TatC from Frankia casuarinae (strain DSM 45818 / CECT 9043 / HFP020203 / CcI3).